A 130-amino-acid polypeptide reads, in one-letter code: Transcription antitermination protein NusB (130 aa).

It belongs to the NusB family.

In terms of biological role, involved in transcription antitermination. Required for transcription of ribosomal RNA (rRNA) genes. Binds specifically to the boxA antiterminator sequence of the ribosomal RNA (rrn) operons. This chain is Transcription antitermination protein NusB, found in Bacillus velezensis (strain DSM 23117 / BGSC 10A6 / LMG 26770 / FZB42) (Bacillus amyloliquefaciens subsp. plantarum).